A 266-amino-acid chain; its full sequence is Short-chain dehydrogenase/reductase AacuF (266 aa).

Residues L13, D57, and N85 each coordinate NADP(+). Residues S145 and Y164 each act as proton donor in the active site. Positions 164, 168, and 198 each coordinate NADP(+). The active-site Lowers pKa of active site Tyr is K168.

The protein belongs to the short-chain dehydrogenases/reductases (SDR) family.

Its pathway is secondary metabolite biosynthesis. Its function is as follows. Short-chain dehydrogenase/reductase; part of the gene cluster that mediates the biosynthesis of the tetrahydroxanthone dimer secalonic acid D. The pathway begins with the synthesis of atrochrysone thioester by the polyketide synthase AacuL. The atrochrysone carboxyl ACP thioesterase AacuM then breaks the thioester bond and releases the atrochrysone carboxylic acid from AacuL. Atrochrysone carboxylic acid is decarboxylated by the decarboxylase AacuI, and oxidized by the anthrone oxygenase AacuG to yield emodin. Emodin is then reduced to emodin hydroquinone by a yet unidentified oxidoreductase. A-ring reduction by the short chain dehydrogenase AacuN, dehydration by the scytalone dehydratase-like protein AacuK and probable spontaneous re-oxidation, results in overall deoxygenation to chrysophanol. Baeyer-Villiger oxidation by the Baeyer-Villiger monooxygenase (BVMO) AacuH then yields monodictyphenone. Monodictyphenone is transformed into compounds with the tetrahydroxanthone skeleton via methylesterification by the methyltransferase AacuQ, followed by the action of the flavin-dependent monooxygenase AacuC, the isomerase AacuP, and the short chain dehydrogenase/reductase AacuF or AacuD. AacuF and AacuD should accept the same compound as a substrate but perform the ketoreduction with a different stereoselectivity, thus yielding blennolides B and A, respectively. In the final step of the biosynthesis, the cytochrome P450 monooxygenase AacuE accepts blennolide B and/or blennolide A to conduct the dimerization reaction to furnish the tetrahydroxanthone dimers, secalonic acids D, B, and F. This Aspergillus aculeatus (strain ATCC 16872 / CBS 172.66 / WB 5094) protein is Short-chain dehydrogenase/reductase AacuF.